The following is a 91-amino-acid chain: DNA-directed RNA polymerase subunit omega (91 aa).

This sequence belongs to the RNA polymerase subunit omega family. In terms of assembly, the RNAP catalytic core consists of 2 alpha, 1 beta, 1 beta' and 1 omega subunit. When a sigma factor is associated with the core the holoenzyme is formed, which can initiate transcription.

It catalyses the reaction RNA(n) + a ribonucleoside 5'-triphosphate = RNA(n+1) + diphosphate. Its function is as follows. Promotes RNA polymerase assembly. Latches the N- and C-terminal regions of the beta' subunit thereby facilitating its interaction with the beta and alpha subunits. In Actinobacillus pleuropneumoniae serotype 5b (strain L20), this protein is DNA-directed RNA polymerase subunit omega.